Here is a 254-residue protein sequence, read N- to C-terminus: Citrate synthase-lysine N-methyltransferase CSKMT, mitochondrial (254 aa).

Residues 1–45 constitute a mitochondrion transit peptide; that stretch reads MLLNRFLVPLRSLQKLTQARRWHQTSLINDLVVNMDKKAMWDRFY.

This sequence belongs to the methyltransferase superfamily.

The protein resides in the mitochondrion. The enzyme catalyses L-lysyl-[citrate synthase] + S-adenosyl-L-methionine = N(6)-methyl-L-lysyl-[citrate synthase] + S-adenosyl-L-homocysteine + H(+). It carries out the reaction N(6)-methyl-L-lysyl-[citrate synthase] + S-adenosyl-L-methionine = N(6),N(6)-dimethyl-L-lysyl-[citrate synthase] + S-adenosyl-L-homocysteine + H(+). The catalysed reaction is N(6),N(6)-dimethyl-L-lysyl-[citrate synthase] + S-adenosyl-L-methionine = N(6),N(6),N(6)-trimethyl-L-lysyl-[citrate synthase] + S-adenosyl-L-homocysteine + H(+). Citrate synthase-lysine methyltransferase activity is inhibited by S-adenosylhomocysteine (AdoHcy) and oxaloacetate (OAA). Its function is as follows. Protein-lysine methyltransferase that selectively trimethylates citrate synthase (CS) in mitochondria. Seems to conduct trimethylation in a highly distributive manner rather than in a processive manner, and thus introduces a single methyl group per binding event. The sequence is that of Citrate synthase-lysine N-methyltransferase CSKMT, mitochondrial from Danio rerio (Zebrafish).